A 210-amino-acid chain; its full sequence is Actin-related protein 3C (210 aa).

The signal sequence occupies residues 1-21 (MFESFNVPGLYIAVQAVLALA).

It belongs to the actin family. In terms of tissue distribution, expressed in kidney, stomach, spleen, bone marrow, uterus, testis, placenta, skeletal muscle, mammary gland, lung, fetal liver, and fetal kidney, but not detected in small intestine, brain, and thymus. Expressed in low-metastatic lung adenocarcinoma cells but not in high-metastatic ones.

Its function is as follows. May play a role in the suppression of metastatic potential in lung adenoma carcinoma cells. The chain is Actin-related protein 3C (ACTR3C) from Homo sapiens (Human).